A 676-amino-acid polypeptide reads, in one-letter code: Ribonuclease R (676 aa).

Positions 207–527 (RKDLRDLLCF…LIVHRLLFNP (321 aa)) constitute an RNB domain. The S1 motif domain occupies 566–651 (NKFLQEQPKT…LTQKIVWSIA (86 aa)). The disordered stretch occupies residues 656–676 (DKPKKIKKTPSKKKGTKKRAS). The span at 659–676 (KKIKKTPSKKKGTKKRAS) shows a compositional bias: basic residues.

It belongs to the RNR ribonuclease family. RNase R subfamily.

It is found in the cytoplasm. It carries out the reaction Exonucleolytic cleavage in the 3'- to 5'-direction to yield nucleoside 5'-phosphates.. In terms of biological role, 3'-5' exoribonuclease that releases 5'-nucleoside monophosphates and is involved in maturation of structured RNAs. The protein is Ribonuclease R of Chlamydia pneumoniae (Chlamydophila pneumoniae).